A 189-amino-acid polypeptide reads, in one-letter code: Large ribosomal subunit protein eL19A (189 aa).

Lys21 participates in a covalent cross-link: Glycyl lysine isopeptide (Lys-Gly) (interchain with G-Cter in ubiquitin). Ser30 and Ser37 each carry phosphoserine. Residues Lys53 and Lys60 each participate in a glycyl lysine isopeptide (Lys-Gly) (interchain with G-Cter in ubiquitin) cross-link. The segment at 58-85 (HSKSRTRAHAQSKREGRHSGYGKRKGTR) is disordered. Positions 59 to 68 (SKSRTRAHAQ) are enriched in basic residues. Ser91 carries the post-translational modification Phosphoserine. Glycyl lysine isopeptide (Lys-Gly) (interchain with G-Cter in ubiquitin) cross-links involve residues Lys146 and Lys186. Positions 164–189 (LKNRAARDRRAQRVAEKRDALLKEDA) are disordered.

This sequence belongs to the eukaryotic ribosomal protein eL19 family. As to quaternary structure, component of the large ribosomal subunit (LSU). Mature yeast ribosomes consist of a small (40S) and a large (60S) subunit. The 40S small subunit contains 1 molecule of ribosomal RNA (18S rRNA) and 33 different proteins (encoded by 57 genes). The large 60S subunit contains 3 rRNA molecules (25S, 5.8S and 5S rRNA) and 46 different proteins (encoded by 81 genes). eL19 lies in close proximity to the binding site for eukaryotic initiation factor eIF4G.

The protein localises to the cytoplasm. Component of the ribosome, a large ribonucleoprotein complex responsible for the synthesis of proteins in the cell. The small ribosomal subunit (SSU) binds messenger RNAs (mRNAs) and translates the encoded message by selecting cognate aminoacyl-transfer RNA (tRNA) molecules. The large subunit (LSU) contains the ribosomal catalytic site termed the peptidyl transferase center (PTC), which catalyzes the formation of peptide bonds, thereby polymerizing the amino acids delivered by tRNAs into a polypeptide chain. The nascent polypeptides leave the ribosome through a tunnel in the LSU and interact with protein factors that function in enzymatic processing, targeting, and the membrane insertion of nascent chains at the exit of the ribosomal tunnel. eL19 may play a role in the last stages of translation initiation, in particular subunit joining and shedding/releasing factors. The chain is Large ribosomal subunit protein eL19A from Saccharomyces cerevisiae (strain ATCC 204508 / S288c) (Baker's yeast).